A 129-amino-acid chain; its full sequence is Probable protein cornichon homolog 2 (129 aa).

A run of 2 helical transmembrane segments spans residues 45 to 65 (FIVQ…FMTL) and 105 to 125 (LAYI…SALD).

It belongs to the cornichon family.

It localises to the membrane. This chain is Probable protein cornichon homolog 2, found in Arabidopsis thaliana (Mouse-ear cress).